Here is a 1128-residue protein sequence, read N- to C-terminus: Apoptosis-stimulating of p53 protein 2 (1128 aa).

Disordered stretches follow at residues 86-106 (PGRD…RNGV) and 322-341 (KENL…ASAP). The span at 322–339 (KENLPVSSDGNLPQQAAS) shows a compositional bias: polar residues. An interaction with APPBP1 region spans residues 332–348 (NLPQQAASAPSRVAAVG). S480 bears the Phosphoserine mark. 2 disordered regions span residues 494–598 (NVAK…LPPF) and 655–706 (NQQQ…LPFL). Polar residues predominate over residues 528-537 (GSSQQLSTVV). Phosphoserine occurs at positions 556, 569, 572, and 576. Residues 558-575 (SIPSVGQDQTLSPGSKQE) show a composition bias toward polar residues. Residues 655-670 (NQQQHPENIYSNSQGK) show a composition bias toward polar residues. Residues S698, S714, and S737 each carry the phosphoserine modification. Disordered regions lie at residues 724–748 (KLSN…NGPN) and 802–909 (SLVP…TNLR). Positions 840–849 (NSPNLQNNPE) are enriched in low complexity. The short motif at 866-875 (YPPYPPPPYP) is the SH3-binding element. Pro residues predominate over residues 867–876 (PPYPPPPYPS). Positions 876–1128 (SGEPEGPGED…RIKPRQRSLA (253 aa)) are mediates interaction with APC2. ANK repeat units follow at residues 926–957 (PLAL…LPND), 958–990 (EGIT…AADS), 991–1024 (DGWT…MTYS), and 1025–1067 (DMQT…ALWD). Residues 1057-1119 (MNKGVIYALW…PRNLLGLYPR (63 aa)) enclose the SH3 domain.

It belongs to the ASPP family. Interacts with P53/TP53; the interaction promotes pro-apoptotic activity. Interacts with BCL2. Interacts with protein phosphatase 1. Interacts with RELA NF-kappa-B subunit. This interaction probably prevents the activation of apoptosis, possibly by preventing its interaction with TP53. Interacts with APC2 and NAE1. Interacts with DDX42 (via the C-terminus); the interaction is not inhibited by TP53BP2 ubiquitination and is independent of p53/TP53. As to expression, widely expressed. Expressed in spleen, thymus, prostate, testis, ovary, small intestine, colon and peripheral blood leukocyte. Reduced expression in breast carcinomas expressing a wild-type TP53 protein. Overexpressed in lung cancer cell lines.

It localises to the cytoplasm. The protein localises to the perinuclear region. Its subcellular location is the nucleus. Regulator that plays a central role in regulation of apoptosis and cell growth via its interactions with proteins such as TP53. Regulates TP53 by enhancing the DNA binding and transactivation function of TP53 on the promoters of proapoptotic genes in vivo. Inhibits the ability of NAE1 to conjugate NEDD8 to CUL1, and thereby decreases NAE1 ability to induce apoptosis. Impedes cell cycle progression at G2/M. Its apoptosis-stimulating activity is inhibited by its interaction with DDX42. The protein is Apoptosis-stimulating of p53 protein 2 (TP53BP2) of Homo sapiens (Human).